Consider the following 323-residue polypeptide: MKTTFLDFEQPIAELEAKIEELRFVQDDSAVDISEEIERLSKKSQQLTKDLYANLTPWQVSQIARHPQRPYTLDYVSELFTDFHELHGDRAFADDQSIVGGLARFNGHACMVIGHQKGRDTKERAARNFGMPRPEGYRKAERLMRVAEKFGLPIFTFVDTPGAYPGVGAEERGQSEAIGHNLYVMAELKTPIIATVIGEGGSGGALAIAVADTVMMLQFSTYSVISPEGCASILWKSAAKAPEAAEALGLTAHRLKALGLIDKIVNEPLGGAHRDPKGMAALLRRALGDSLRQFQGMSVDALRERRFERLMAYGKFKETTPRA.

Residues 39 to 293 form the CoA carboxyltransferase C-terminal domain; that stretch reads RLSKKSQQLT…RRALGDSLRQ (255 aa).

Belongs to the AccA family. In terms of assembly, acetyl-CoA carboxylase is a heterohexamer composed of biotin carboxyl carrier protein (AccB), biotin carboxylase (AccC) and two subunits each of ACCase subunit alpha (AccA) and ACCase subunit beta (AccD).

Its subcellular location is the cytoplasm. The enzyme catalyses N(6)-carboxybiotinyl-L-lysyl-[protein] + acetyl-CoA = N(6)-biotinyl-L-lysyl-[protein] + malonyl-CoA. The protein operates within lipid metabolism; malonyl-CoA biosynthesis; malonyl-CoA from acetyl-CoA: step 1/1. Its function is as follows. Component of the acetyl coenzyme A carboxylase (ACC) complex. First, biotin carboxylase catalyzes the carboxylation of biotin on its carrier protein (BCCP) and then the CO(2) group is transferred by the carboxyltransferase to acetyl-CoA to form malonyl-CoA. The sequence is that of Acetyl-coenzyme A carboxylase carboxyl transferase subunit alpha from Burkholderia pseudomallei (strain 1106a).